Here is a 388-residue protein sequence, read N- to C-terminus: MRYLTAGESHGPRLTAIIEGIPAGLPLTAEDINEDLRRRQGGYGRGGRMKIESDQVVFTSGVRHGKTTGAPITMDVINKDHQKWLDIMSAEDIEDRLKSKRKITHPRPGHADLVGGIKYRFDDLRNSLERSSARETTMRVAVGAVAKRLLAELDMEIANHVVVFGGKEIDVPENLTVAEIKQRAAQSEVSIVNQEREQEIKDYIDQIKRDGDTIGGVVETVVGGVPVGLGSYVQWDRKLDARLAQAVVSINAFKGVEFGLGFEAGYRKGSQVMDEILWSKEDGYTRRTNNLGGFEGGMTNGQPIVVRGVMKPIPTLYKPLMSVDIETHEPYKATVERSDPTALPAAGMVMEAVVATVLAQEILEKFSSDNLEELKEAVAKHRDYTKNY.

Arginine 39 and arginine 45 together coordinate NADP(+). FMN contacts are provided by residues 130–132, 251–252, glycine 296, 311–315, and arginine 337; these read RSS, NA, and KPIPT.

The protein belongs to the chorismate synthase family. As to quaternary structure, homotetramer. FMNH2 is required as a cofactor.

It carries out the reaction 5-O-(1-carboxyvinyl)-3-phosphoshikimate = chorismate + phosphate. It participates in metabolic intermediate biosynthesis; chorismate biosynthesis; chorismate from D-erythrose 4-phosphate and phosphoenolpyruvate: step 7/7. Functionally, catalyzes the anti-1,4-elimination of the C-3 phosphate and the C-6 proR hydrogen from 5-enolpyruvylshikimate-3-phosphate (EPSP) to yield chorismate, which is the branch point compound that serves as the starting substrate for the three terminal pathways of aromatic amino acid biosynthesis. This reaction introduces a second double bond into the aromatic ring system. The sequence is that of Chorismate synthase from Streptococcus pneumoniae (strain 70585).